The sequence spans 388 residues: 1-deoxy-D-xylulose 5-phosphate reductoisomerase (388 aa).

Residues T10, G11, S12, I13, N37, and N121 each coordinate NADPH. K122 provides a ligand contact to 1-deoxy-D-xylulose 5-phosphate. Position 123 (E123) interacts with NADPH. Residue D147 coordinates Mn(2+). Positions 148, 149, 173, and 196 each coordinate 1-deoxy-D-xylulose 5-phosphate. E149 contacts Mn(2+). Residue G202 participates in NADPH binding. The 1-deoxy-D-xylulose 5-phosphate site is built by S209, N214, K215, and E218. A Mn(2+)-binding site is contributed by E218.

Belongs to the DXR family. Requires Mg(2+) as cofactor. Mn(2+) serves as cofactor.

The enzyme catalyses 2-C-methyl-D-erythritol 4-phosphate + NADP(+) = 1-deoxy-D-xylulose 5-phosphate + NADPH + H(+). Its pathway is isoprenoid biosynthesis; isopentenyl diphosphate biosynthesis via DXP pathway; isopentenyl diphosphate from 1-deoxy-D-xylulose 5-phosphate: step 1/6. Its function is as follows. Catalyzes the NADPH-dependent rearrangement and reduction of 1-deoxy-D-xylulose-5-phosphate (DXP) to 2-C-methyl-D-erythritol 4-phosphate (MEP). This chain is 1-deoxy-D-xylulose 5-phosphate reductoisomerase, found in Lachnoclostridium phytofermentans (strain ATCC 700394 / DSM 18823 / ISDg) (Clostridium phytofermentans).